The primary structure comprises 150 residues: Nucleoside diphosphate kinase (150 aa).

Residues Lys-9, Phe-57, Arg-85, Thr-91, Arg-102, and Asn-112 each contribute to the ATP site. Residue His-115 is the Pros-phosphohistidine intermediate of the active site.

This sequence belongs to the NDK family. Mg(2+) serves as cofactor.

The protein localises to the cytoplasm. The enzyme catalyses a 2'-deoxyribonucleoside 5'-diphosphate + ATP = a 2'-deoxyribonucleoside 5'-triphosphate + ADP. It catalyses the reaction a ribonucleoside 5'-diphosphate + ATP = a ribonucleoside 5'-triphosphate + ADP. Its function is as follows. Major role in the synthesis of nucleoside triphosphates other than ATP. The ATP gamma phosphate is transferred to the NDP beta phosphate via a ping-pong mechanism, using a phosphorylated active-site intermediate. The polypeptide is Nucleoside diphosphate kinase (Methanoregula boonei (strain DSM 21154 / JCM 14090 / 6A8)).